Consider the following 282-residue polypeptide: Transmembrane protein 41B (282 aa).

The tract at residues Met1 to Pro36 is disordered. Transmembrane regions (helical) follow at residues Met43–Phe63, Thr102–Gly122, Leu138–Leu160, Leu188–Ile208, Pro216–Ile236, and Ala251–Val271. The segment at Gly131–Leu242 is VTT domain; required for its function in autophagy.

This sequence belongs to the TMEM41 family.

Its subcellular location is the endoplasmic reticulum membrane. The protein resides in the endomembrane system. It carries out the reaction a 1,2-diacyl-sn-glycero-3-phospho-L-serine(in) = a 1,2-diacyl-sn-glycero-3-phospho-L-serine(out). It catalyses the reaction cholesterol(in) = cholesterol(out). The enzyme catalyses a 1,2-diacyl-sn-glycero-3-phosphocholine(in) = a 1,2-diacyl-sn-glycero-3-phosphocholine(out). The catalysed reaction is a 1,2-diacyl-sn-glycero-3-phosphoethanolamine(in) = a 1,2-diacyl-sn-glycero-3-phosphoethanolamine(out). Functionally, phospholipid scramblase involved in lipid homeostasis and membrane dynamics processes. Has phospholipid scramblase activity toward cholesterol and phosphatidylserine, as well as phosphatidylethanolamine and phosphatidylcholine. Required for autophagosome formation: participates in early stages of autophagosome biogenesis at the endoplasmic reticulum (ER) membrane by reequilibrating the leaflets of the ER as lipids are extracted by atg2 (atg2a or atg2b) to mediate autophagosome assembly. In addition to autophagy, involved in other processes in which phospholipid scramblase activity is required. Required for normal motor neuron development. This Danio rerio (Zebrafish) protein is Transmembrane protein 41B.